The chain runs to 282 residues: Probable endonuclease 4 (282 aa).

H69, H109, E145, D179, H182, H216, D229, H231, and E261 together coordinate Zn(2+).

Belongs to the AP endonuclease 2 family. It depends on Zn(2+) as a cofactor.

The catalysed reaction is Endonucleolytic cleavage to 5'-phosphooligonucleotide end-products.. Functionally, endonuclease IV plays a role in DNA repair. It cleaves phosphodiester bonds at apurinic or apyrimidinic (AP) sites, generating a 3'-hydroxyl group and a 5'-terminal sugar phosphate. This Edwardsiella ictaluri (strain 93-146) protein is Probable endonuclease 4.